We begin with the raw amino-acid sequence, 217 residues long: Large ribosomal subunit protein uL3 (217 aa).

Belongs to the universal ribosomal protein uL3 family. Part of the 50S ribosomal subunit. Forms a cluster with proteins L14 and L19.

Its function is as follows. One of the primary rRNA binding proteins, it binds directly near the 3'-end of the 23S rRNA, where it nucleates assembly of the 50S subunit. In Mycobacterium leprae (strain TN), this protein is Large ribosomal subunit protein uL3.